The sequence spans 39 residues: Contryphan-Cal2 (39 aa).

An N-terminal signal peptide occupies residues 1-20 (MTRTAVLLLTLLFLVAMAAS). A disulfide bridge links cysteine 29 with cysteine 35.

Expressed by the venom duct.

It is found in the secreted. In terms of biological role, probable neurotoxin. The polypeptide is Contryphan-Cal2 (Californiconus californicus (California cone)).